The primary structure comprises 98 residues: MGTGFSKKKKEARLIQQQMSLVQNELQNLEVVGVAGSGLVTITLTGDGEMKQVKIKPECVDVEDLEGLEMLIRAAHADAHKRLKEQSPPIPGFPGFLA.

It belongs to the YbaB/EbfC family. Homodimer.

Its subcellular location is the cytoplasm. The protein resides in the nucleoid. Functionally, binds to DNA and alters its conformation. May be involved in regulation of gene expression, nucleoid organization and DNA protection. In Protochlamydia amoebophila (strain UWE25), this protein is Nucleoid-associated protein pc0477.